The primary structure comprises 275 residues: Putative acyl-[acyl-carrier-protein] desaturase DesA2 (275 aa).

Positions 107, 110, 159, 189, and 192 each coordinate Fe cation.

It belongs to the fatty acid desaturase type 2 family. In terms of assembly, homodimer. The cofactor is Fe(2+).

Its pathway is lipid metabolism; fatty acid metabolism. Functionally, may be a desaturase involved in mycobacterial fatty acid biosynthesis. In Mycobacterium tuberculosis (strain CDC 1551 / Oshkosh), this protein is Putative acyl-[acyl-carrier-protein] desaturase DesA2 (desA2).